Consider the following 73-residue polypeptide: FGESCIAGRFIVPLGQQVTDQRDCALYKCVNYNKKFALETKRCATVNLKSGCKTVPGGAGAAFPSCCPMVTCK.

At lysine 73 the chain carries Lysine amide.

The protein belongs to the scorpion La1-like peptide family. In terms of processing, contains 4 disulfide bonds. Expressed by the venom gland.

The protein resides in the secreted. Its function is as follows. Not toxic to insect. The protein is Venom peptide La1 of Liocheles australasiae (Dwarf wood scorpion).